We begin with the raw amino-acid sequence, 262 residues long: Troponin T, slow skeletal muscle (262 aa).

Over residues 1-31 (MSDTEEQEYEEEQAEDEEAVEEEEAPEEPEP) the composition is skewed to acidic residues. Disordered regions lie at residues 1–62 (MSDT…ERVD) and 109–153 (ERAE…KKKV). Phosphoserine; by CK2 is present on Ser-2. The segment covering 32-41 (VAEREEERPK) has biased composition (basic and acidic residues). The span at 43 to 55 (SRPVVPPLIPPKI) shows a compositional bias: pro residues. Residues 109 to 149 (ERAEQQRFRTEKERERQAKLAEEKMRKEEEEAKKRAEDDAK) show a composition bias toward basic and acidic residues.

It belongs to the troponin T family. In terms of assembly, interacts with TPM3. In terms of tissue distribution, expressed in adult soleus muscle.

Its function is as follows. Troponin T is the tropomyosin-binding subunit of troponin, the thin filament regulatory complex which confers calcium-sensitivity to striated muscle actomyosin ATPase activity. This chain is Troponin T, slow skeletal muscle (Tnnt1), found in Mus musculus (Mouse).